Here is a 227-residue protein sequence, read N- to C-terminus: Uridylate kinase (227 aa).

Gly11 to Ser12 is an ATP binding site. UMP is bound at residue Gly45. Positions 46 and 50 each coordinate ATP. UMP contacts are provided by residues Asp67 and Thr114–Thr120. Thr140, Tyr146, and Asp149 together coordinate ATP.

The protein belongs to the UMP kinase family. Homohexamer.

It is found in the cytoplasm. It carries out the reaction UMP + ATP = UDP + ADP. It functions in the pathway pyrimidine metabolism; CTP biosynthesis via de novo pathway; UDP from UMP (UMPK route): step 1/1. Inhibited by UTP. Functionally, catalyzes the reversible phosphorylation of UMP to UDP. This chain is Uridylate kinase, found in Thermoplasma volcanium (strain ATCC 51530 / DSM 4299 / JCM 9571 / NBRC 15438 / GSS1).